The chain runs to 313 residues: WUSCHEL-related homeobox 5 (313 aa).

The disordered stretch occupies residues Met1–Pro32. The segment covering Leu8–Gly17 has biased composition (gly residues). Over residues Pro22–Ser31 the composition is skewed to pro residues. A DNA-binding region (homeobox; WUS-type) is located at residues Leu40–Gln104. Disordered stretches follow at residues Ala224–Thr247 and Cys271–Arg313. Over residues Cys271–Pro301 the composition is skewed to low complexity.

It belongs to the WUS homeobox family.

The protein localises to the nucleus. Transcription factor which may be involved in developmental processes. This is WUSCHEL-related homeobox 5 (WOX5) from Oryza sativa subsp. japonica (Rice).